The primary structure comprises 121 residues: Small ribosomal subunit protein uS13 (121 aa).

Residues 96-121 (PVRGQNTKNNARTRKGKAVAIAGKKK) are disordered. Positions 106–121 (ARTRKGKAVAIAGKKK) are enriched in basic residues.

Belongs to the universal ribosomal protein uS13 family. As to quaternary structure, part of the 30S ribosomal subunit. Forms a loose heterodimer with protein S19. Forms two bridges to the 50S subunit in the 70S ribosome.

In terms of biological role, located at the top of the head of the 30S subunit, it contacts several helices of the 16S rRNA. In the 70S ribosome it contacts the 23S rRNA (bridge B1a) and protein L5 of the 50S subunit (bridge B1b), connecting the 2 subunits; these bridges are implicated in subunit movement. Contacts the tRNAs in the A and P-sites. The chain is Small ribosomal subunit protein uS13 from Streptococcus gordonii (strain Challis / ATCC 35105 / BCRC 15272 / CH1 / DL1 / V288).